A 138-amino-acid polypeptide reads, in one-letter code: uncharacterized protein (138 aa).

The next 3 helical transmembrane spans lie at 12–32 (LHFL…VLPI), 62–82 (LIAV…FSVL), and 111–131 (FHWV…LICS).

It localises to the cell membrane. This is an uncharacterized protein from Haemophilus influenzae (strain ATCC 51907 / DSM 11121 / KW20 / Rd).